The sequence spans 243 residues: HTH-type quorum sensing-dependent transcriptional regulator RpaR (243 aa).

The HTH luxR-type domain occupies 174-239 (KPIRRNRLTP…AAVAKALTLG (66 aa)). The segment at residues 198–217 (AWEISVILCITERTVKFHLI) is a DNA-binding region (H-T-H motif).

Belongs to the autoinducer-regulated transcriptional regulatory protein family.

Its function is as follows. Responds to the quorum-sensing autoinducer 4-coumaroyl-homoserine lactone to regulate expression of several genes. Represses expression of rpaI in the absence of the inducer. The sequence is that of HTH-type quorum sensing-dependent transcriptional regulator RpaR from Rhodopseudomonas palustris (strain ATCC BAA-98 / CGA009).